A 336-amino-acid polypeptide reads, in one-letter code: Iron(3+)-hydroxamate import system permease protein FhuG (336 aa).

The next 9 helical transmembrane spans lie at 9–29 (LIVMAVTFLLIVVVFFISLNL), 63–83 (IILSLLVGAGISVAGAILQSV), 91–111 (PGILGINAGGSLAVVLFIYFF), 124–144 (FMLPFSALAGAILAAFLIYIL), 155–175 (LILVGIGVNAGFNALLLIFQL), 193–213 (IWGANWNMIWAILPWIVILLL), 245–265 (ILLLAAVTLAASCVAAAGGIA), 285–305 (TLIPVSAFIGSFLFLLADTLA), and 313–333 (EIPVGLVISVLGAPYFIYLLM).

This sequence belongs to the binding-protein-dependent transport system permease family. FecCD subfamily. In terms of assembly, the complex is composed of an ATP-binding protein (FhuC), two transmembrane proteins (FhuB and FhuG) and a solute-binding protein (FhuD or YxeB).

It localises to the cell membrane. In terms of biological role, part of the ABC transporter complex FhuBGCD involved in iron(3+)-hydroxamate import. Responsible for the translocation of the substrate across the membrane. This is Iron(3+)-hydroxamate import system permease protein FhuG (fhuG) from Bacillus subtilis (strain 168).